The primary structure comprises 243 residues: Probable transcriptional regulatory protein Patl_0550 (243 aa).

The protein belongs to the TACO1 family.

The protein localises to the cytoplasm. The polypeptide is Probable transcriptional regulatory protein Patl_0550 (Pseudoalteromonas atlantica (strain T6c / ATCC BAA-1087)).